The primary structure comprises 741 residues: Wall-associated receptor kinase 3 (741 aa).

The first 23 residues, 1–23 (MKFQEGVFLVVIFFLAYTQLVKG), serve as a signal peptide directing secretion. Residues 24–342 (QHQPREDCKL…CTRPEYKRTR (319 aa)) are Extracellular-facing. N-linked (GlcNAc...) asparagine glycans are attached at residues asparagine 37, asparagine 59, asparagine 78, asparagine 100, asparagine 103, asparagine 141, asparagine 192, asparagine 199, asparagine 232, asparagine 246, asparagine 261, and asparagine 266. The EGF-like 1 domain occupies 245 to 292 (GNQTCEQAGSTRICGKNSSCYNSTTRNGYICKCNEGYDGNPYRSEGCK). 6 cysteine pairs are disulfide-bonded: cysteine 249-cysteine 264, cysteine 258-cysteine 275, cysteine 277-cysteine 291, cysteine 297-cysteine 310, cysteine 304-cysteine 319, and cysteine 321-cysteine 333. One can recognise an EGF-like 2; calcium-binding domain in the interval 293 to 334 (DIDECISDTHNCSDPKTCRNRDGGFDCKCPSGYDLNSSMSCT). Residue asparagine 303 is glycosylated (N-linked (GlcNAc...) asparagine). An N-linked (GlcNAc...) asparagine glycan is attached at asparagine 328. Residues 343–363 (IFLVIIIGVLVLLLAAICIQH) traverse the membrane as a helical segment. The Cytoplasmic portion of the chain corresponds to 364–741 (ATKQRKYTKL…VAILDIETGR (378 aa)). Threonine 404 carries the post-translational modification Phosphothreonine. In terms of domain architecture, Protein kinase spans 415-698 (YDESRILGQG…RVEKTKHKWS (284 aa)). ATP-binding positions include 421-429 (LGQGGQGTV) and lysine 443. Tyrosine 488 carries the post-translational modification Phosphotyrosine. The Proton acceptor role is filled by aspartate 540. 2 positions are modified to phosphothreonine: threonine 574 and threonine 579. Position 587 is a phosphotyrosine (tyrosine 587).

Belongs to the protein kinase superfamily. Ser/Thr protein kinase family. Predominantly expressed in green tissues such as stems and leaves.

The protein localises to the membrane. The catalysed reaction is L-seryl-[protein] + ATP = O-phospho-L-seryl-[protein] + ADP + H(+). It catalyses the reaction L-threonyl-[protein] + ATP = O-phospho-L-threonyl-[protein] + ADP + H(+). Functionally, serine/threonine-protein kinase that may function as a signaling receptor of extracellular matrix component. Binding to pectin may have significance in the control of cell expansion, morphogenesis and development. In Arabidopsis thaliana (Mouse-ear cress), this protein is Wall-associated receptor kinase 3 (WAK3).